We begin with the raw amino-acid sequence, 293 residues long: D-psicose 3-epimerase (293 aa).

2 residues coordinate substrate: tyrosine 6 and alanine 107. Residue glutamate 150 is the Proton donor/acceptor of the active site. A Mn(2+)-binding site is contributed by glutamate 150. Residues glutamate 156 and 183–186 (DTFH) contribute to the substrate site. Positions 183 and 209 each coordinate Mn(2+). Position 215 (arginine 215) interacts with substrate. Glutamate 244 serves as the catalytic Proton donor/acceptor. Residue glutamate 244 participates in Mn(2+) binding.

This sequence belongs to the hyi family. In terms of assembly, homotetramer. The cofactor is Mn(2+). Co(2+) serves as cofactor.

It carries out the reaction D-allulose = keto-D-fructose. Involved in the biosynthesis of D-psicose. Catalyzes the reversible epimerization of D-fructose at the C3 position to yield D-psicose. The enzyme is highly specific for D-psicose and shows very low activity with D-tagatose. The polypeptide is D-psicose 3-epimerase (Ruminiclostridium cellulolyticum (strain ATCC 35319 / DSM 5812 / JCM 6584 / H10) (Clostridium cellulolyticum)).